The chain runs to 92 residues: Precursor of elicitor peptide 1 (92 aa).

The propeptide occupies 1–69 (MEKSDRRSEE…EKEEVVVTSR (69 aa)). A disordered region spans residues 35 to 92 (HQDSPTTSSPGTSKQPKEEKEDVTMEKEEVVVTSRATKVKAKQRGKEKVSSGRPGQHN). The segment covering 37–48 (DSPTTSSPGTSK) has biased composition (polar residues). Residues 49 to 64 (QPKEEKEDVTMEKEEV) show a composition bias toward basic and acidic residues.

The protein belongs to the brassicaceae elicitor peptide family. As to quaternary structure, interacts with its receptor PEPR1.

Functionally, elicitor of plant defense. Induces the production of plant defensin (PDF1.2) and of H(2)O(2). Promotes resistance to the root fungal pathogen P.irregulare. Triggers the expression of several PROSCOOP genes (e.g. PROSCOOP2, PROSCOOP7, PROSCOOP8, PROSCOOP12 and PROSCOOP13). The chain is Precursor of elicitor peptide 1 from Arabidopsis thaliana (Mouse-ear cress).